We begin with the raw amino-acid sequence, 265 residues long: Phosphate import ATP-binding protein PstB (265 aa).

The region spanning 18–260 is the ABC transporter domain; sequence ISARDVQVFY…PEDPRTESYI (243 aa). An ATP-binding site is contributed by 50–57; the sequence is GPSGCGKS.

Belongs to the ABC transporter superfamily. Phosphate importer (TC 3.A.1.7) family. In terms of assembly, the complex is composed of two ATP-binding proteins (PstB), two transmembrane proteins (PstC and PstA) and a solute-binding protein (PstS).

Its subcellular location is the cell inner membrane. It catalyses the reaction phosphate(out) + ATP + H2O = ADP + 2 phosphate(in) + H(+). Part of the ABC transporter complex PstSACB involved in phosphate import. Responsible for energy coupling to the transport system. This chain is Phosphate import ATP-binding protein PstB, found in Roseobacter denitrificans (strain ATCC 33942 / OCh 114) (Erythrobacter sp. (strain OCh 114)).